Reading from the N-terminus, the 880-residue chain is Valine--tRNA ligase (880 aa).

Positions 49-59 (PNVTGKLHLGH) match the 'HIGH' region motif. A 'KMSKS' region motif is present at residues 525–529 (KMSKS). K528 contributes to the ATP binding site. A coiled-coil region spans residues 809-880 (LEGLINIDEE…VEKRIAELKN (72 aa)).

Belongs to the class-I aminoacyl-tRNA synthetase family. ValS type 1 subfamily. As to quaternary structure, monomer.

Its subcellular location is the cytoplasm. The catalysed reaction is tRNA(Val) + L-valine + ATP = L-valyl-tRNA(Val) + AMP + diphosphate. In terms of biological role, catalyzes the attachment of valine to tRNA(Val). As ValRS can inadvertently accommodate and process structurally similar amino acids such as threonine, to avoid such errors, it has a 'posttransfer' editing activity that hydrolyzes mischarged Thr-tRNA(Val) in a tRNA-dependent manner. This is Valine--tRNA ligase from Bacillus licheniformis (strain ATCC 14580 / DSM 13 / JCM 2505 / CCUG 7422 / NBRC 12200 / NCIMB 9375 / NCTC 10341 / NRRL NRS-1264 / Gibson 46).